A 456-amino-acid chain; its full sequence is Aminotransferase ALD1, chloroplastic (456 aa).

A chloroplast-targeting transit peptide spans Met1 to Asn43. Pyridoxal 5'-phosphate contacts are provided by residues Tyr108, Ala142–Gln143, Asn223, Asp251, Tyr254, Ser281, Ser283, Arg292, and Asn323.

It belongs to the class-I pyridoxal-phosphate-dependent aminotransferase family. LL-diaminopimelate aminotransferase subfamily. Pyridoxal 5'-phosphate is required as a cofactor. In terms of tissue distribution, highly expressed in senescing leaves, flowers, siliques and seeds.

The protein localises to the plastid. It localises to the chloroplast. Its function is as follows. Aminotransferase involved in local and systemic acquired resistance (SAR) to the bacterial pathogen P.syringae. Required for salicylic acid (SA) and camalexin accumulation upon pathogen infection. Possesses aminotransferase activity in vitro and may generate amino-acid-derived defense signals in vivo. May be involved in ethylene-induced senescence signaling. Involved in the biosynthesis of pipecolate (Pip), a metabolite that orchestrates defense amplification, positive regulation of SA biosynthesis, and priming to guarantee effective local resistance induction and the establishment of SAR. Converts lysine to alpha-keto-epsilon-aminocaproate, which then can spontaneously cyclize to form delta-(1)-piperideine-2-carboxylate (P2C). P2C is converted to Pip by SARD4. May produce non-Pip metabolites that play roles in immunity. Involved in the synthesis of distinct metabolite signals that affect basal and early defenses, and later defense responses. The chain is Aminotransferase ALD1, chloroplastic from Arabidopsis thaliana (Mouse-ear cress).